Reading from the N-terminus, the 398-residue chain is MNYNKKSIEDIDVKGKKVLVRCDFNVPLNEGKITDENRLVGALPTIKYLMEKGAKIILCSHMGKPKGEPKKELSLLPVAKRLSEMLNKEVIFADDDNVVGENAKKAVEDMKDGDVVLLQNTRYRKEETKNEEVFSKELASLADVFVNDAFGTAHRAHCSTVGVTNYLKEAACGYLIQKELKFLGNAVEKPERPFVAILGGAKVSDKINVINNLLDKVDTLIIGGGMGYTFLKAQGYTIGNSLVEEDKVEYSKEMIDKAKEKGVNLLLPIDNVVADKFDKDASPVITEDQNIGEGYMGLDIGPKTAKIYSDAIKSAKTVVWNGPMGVFEFKSFANGTIEVAKAMADSDAVTIIGGGDSAAAVNILGFGDKMTHISTGGGASLEFLEGKELPGIAALNDK.

Substrate is bound by residues 23 to 25 (DFN), arginine 38, 61 to 64 (HMGK), arginine 122, and arginine 155. ATP contacts are provided by residues lysine 206, glycine 297, glutamate 328, and 354–357 (GGDS).

It belongs to the phosphoglycerate kinase family. Monomer.

Its subcellular location is the cytoplasm. The catalysed reaction is (2R)-3-phosphoglycerate + ATP = (2R)-3-phospho-glyceroyl phosphate + ADP. The protein operates within carbohydrate degradation; glycolysis; pyruvate from D-glyceraldehyde 3-phosphate: step 2/5. The sequence is that of Phosphoglycerate kinase from Clostridium botulinum (strain Hall / ATCC 3502 / NCTC 13319 / Type A).